Reading from the N-terminus, the 314-residue chain is Acetyl-coenzyme A carboxylase carboxyl transferase subunit beta (314 aa).

One can recognise a CoA carboxyltransferase N-terminal domain in the interval 24-293; that stretch reads LWIKCPDTGQ…IDAAPEPSPA (270 aa). Residues 283–314 form a disordered region; that stretch reads EIDAAPEPSPAAEEPAEPMPAPEAAAPSAPPA. 2 stretches are compositionally biased toward low complexity: residues 284-295 and 304-314; these read IDAAPEPSPAAE and PEAAAPSAPPA.

This sequence belongs to the AccD/PCCB family. As to quaternary structure, acetyl-CoA carboxylase is a heterohexamer composed of biotin carboxyl carrier protein (AccB), biotin carboxylase (AccC) and two subunits each of ACCase subunit alpha (AccA) and ACCase subunit beta (AccD).

It is found in the cytoplasm. The catalysed reaction is N(6)-carboxybiotinyl-L-lysyl-[protein] + acetyl-CoA = N(6)-biotinyl-L-lysyl-[protein] + malonyl-CoA. It functions in the pathway lipid metabolism; malonyl-CoA biosynthesis; malonyl-CoA from acetyl-CoA: step 1/1. In terms of biological role, component of the acetyl coenzyme A carboxylase (ACC) complex. Biotin carboxylase (BC) catalyzes the carboxylation of biotin on its carrier protein (BCCP) and then the CO(2) group is transferred by the transcarboxylase to acetyl-CoA to form malonyl-CoA. The sequence is that of Acetyl-coenzyme A carboxylase carboxyl transferase subunit beta from Nitrobacter hamburgensis (strain DSM 10229 / NCIMB 13809 / X14).